Reading from the N-terminus, the 287-residue chain is Lipoyl synthase (287 aa).

[4Fe-4S] cluster-binding residues include C34, C39, C45, C60, C64, C67, and S273. Residues 46–262 (WNKRHATVMI…KYIAYSKGFL (217 aa)) form the Radical SAM core domain.

It belongs to the radical SAM superfamily. Lipoyl synthase family. Requires [4Fe-4S] cluster as cofactor.

The protein localises to the cytoplasm. The catalysed reaction is [[Fe-S] cluster scaffold protein carrying a second [4Fe-4S](2+) cluster] + N(6)-octanoyl-L-lysyl-[protein] + 2 oxidized [2Fe-2S]-[ferredoxin] + 2 S-adenosyl-L-methionine + 4 H(+) = [[Fe-S] cluster scaffold protein] + N(6)-[(R)-dihydrolipoyl]-L-lysyl-[protein] + 4 Fe(3+) + 2 hydrogen sulfide + 2 5'-deoxyadenosine + 2 L-methionine + 2 reduced [2Fe-2S]-[ferredoxin]. Its pathway is protein modification; protein lipoylation via endogenous pathway; protein N(6)-(lipoyl)lysine from octanoyl-[acyl-carrier-protein]: step 2/2. Catalyzes the radical-mediated insertion of two sulfur atoms into the C-6 and C-8 positions of the octanoyl moiety bound to the lipoyl domains of lipoate-dependent enzymes, thereby converting the octanoylated domains into lipoylated derivatives. This chain is Lipoyl synthase, found in Wolbachia sp. subsp. Drosophila simulans (strain wRi).